A 196-amino-acid polypeptide reads, in one-letter code: Molybdenum cofactor guanylyltransferase (196 aa).

Residues 12–14 (LAG), lysine 25, asparagine 53, aspartate 71, and aspartate 101 contribute to the GTP site. Aspartate 101 is a binding site for Mg(2+).

The protein belongs to the MobA family. As to quaternary structure, monomer. Mg(2+) serves as cofactor.

Its subcellular location is the cytoplasm. It catalyses the reaction Mo-molybdopterin + GTP + H(+) = Mo-molybdopterin guanine dinucleotide + diphosphate. In terms of biological role, transfers a GMP moiety from GTP to Mo-molybdopterin (Mo-MPT) cofactor (Moco or molybdenum cofactor) to form Mo-molybdopterin guanine dinucleotide (Mo-MGD) cofactor. The polypeptide is Molybdenum cofactor guanylyltransferase (Bordetella petrii (strain ATCC BAA-461 / DSM 12804 / CCUG 43448)).